A 318-amino-acid chain; its full sequence is HPr kinase/phosphorylase (318 aa).

Catalysis depends on residues His146 and Lys167. 161 to 168 (GESGLGKS) contributes to the ATP binding site. Residue Ser168 participates in Mg(2+) binding. The active-site Proton acceptor; for phosphorylation activity. Proton donor; for dephosphorylation activity is the Asp185. An important for the catalytic mechanism of both phosphorylation and dephosphorylation region spans residues 209-218 (LEVRGIGLLD). Glu210 contributes to the Mg(2+) binding site. Arg252 is a catalytic residue. Residues 273 to 278 (QVVAGR) form an important for the catalytic mechanism of dephosphorylation region.

It belongs to the HPrK/P family. Homohexamer. Mg(2+) serves as cofactor.

It catalyses the reaction [HPr protein]-L-serine + ATP = [HPr protein]-O-phospho-L-serine + ADP + H(+). The enzyme catalyses [HPr protein]-O-phospho-L-serine + phosphate + H(+) = [HPr protein]-L-serine + diphosphate. Functionally, catalyzes the ATP- as well as the pyrophosphate-dependent phosphorylation of a specific serine residue in HPr, a phosphocarrier protein of the phosphoenolpyruvate-dependent sugar phosphotransferase system (PTS). HprK/P also catalyzes the pyrophosphate-producing, inorganic phosphate-dependent dephosphorylation (phosphorolysis) of seryl-phosphorylated HPr (P-Ser-HPr). This is HPr kinase/phosphorylase from Verminephrobacter eiseniae (strain EF01-2).